We begin with the raw amino-acid sequence, 316 residues long: 4-hydroxy-3-methylbut-2-enyl diphosphate reductase (316 aa).

C12 is a [4Fe-4S] cluster binding site. (2E)-4-hydroxy-3-methylbut-2-enyl diphosphate is bound by residues H41 and H74. Dimethylallyl diphosphate contacts are provided by H41 and H74. Isopentenyl diphosphate is bound by residues H41 and H74. Residue C96 coordinates [4Fe-4S] cluster. H124 provides a ligand contact to (2E)-4-hydroxy-3-methylbut-2-enyl diphosphate. A dimethylallyl diphosphate-binding site is contributed by H124. Residue H124 coordinates isopentenyl diphosphate. E126 serves as the catalytic Proton donor. T167 provides a ligand contact to (2E)-4-hydroxy-3-methylbut-2-enyl diphosphate. C197 contacts [4Fe-4S] cluster. (2E)-4-hydroxy-3-methylbut-2-enyl diphosphate contacts are provided by S225, S226, N227, and S269. Dimethylallyl diphosphate contacts are provided by S225, S226, N227, and S269. Positions 225, 226, 227, and 269 each coordinate isopentenyl diphosphate.

This sequence belongs to the IspH family. As to quaternary structure, homodimer. It depends on [4Fe-4S] cluster as a cofactor.

The catalysed reaction is isopentenyl diphosphate + 2 oxidized [2Fe-2S]-[ferredoxin] + H2O = (2E)-4-hydroxy-3-methylbut-2-enyl diphosphate + 2 reduced [2Fe-2S]-[ferredoxin] + 2 H(+). The enzyme catalyses dimethylallyl diphosphate + 2 oxidized [2Fe-2S]-[ferredoxin] + H2O = (2E)-4-hydroxy-3-methylbut-2-enyl diphosphate + 2 reduced [2Fe-2S]-[ferredoxin] + 2 H(+). It functions in the pathway isoprenoid biosynthesis; dimethylallyl diphosphate biosynthesis; dimethylallyl diphosphate from (2E)-4-hydroxy-3-methylbutenyl diphosphate: step 1/1. It participates in isoprenoid biosynthesis; isopentenyl diphosphate biosynthesis via DXP pathway; isopentenyl diphosphate from 1-deoxy-D-xylulose 5-phosphate: step 6/6. In terms of biological role, catalyzes the conversion of 1-hydroxy-2-methyl-2-(E)-butenyl 4-diphosphate (HMBPP) into a mixture of isopentenyl diphosphate (IPP) and dimethylallyl diphosphate (DMAPP). Acts in the terminal step of the DOXP/MEP pathway for isoprenoid precursor biosynthesis. This Salmonella agona (strain SL483) protein is 4-hydroxy-3-methylbut-2-enyl diphosphate reductase.